We begin with the raw amino-acid sequence, 205 residues long: MTSAVGNTGMAAPQRVAALNRPNMVSVGTIVFLSQELMFFAGLFAMYFVSRANGLANGSWGEQTDHLNVPYALLITVILVSSSVTCQFGVFAAERGDVYGLRKWFLVTIILGSIFVIGQGYEYITLVGHGLTIQSSVYGSAFFITTGFHALHVIAGVMAFVVVLMRIHKSKFTPAQATAAMVVSYYWHFVDVVWIGLFITIYFIQ.

5 helical membrane-spanning segments follow: residues 29–49 (TIVFLSQELMFFAGLFAMYFV), 72–92 (ALLITVILVSSSVTCQFGVFA), 104–124 (WFLVTIILGSIFVIGQGYEYI), 142–162 (FFITTGFHALHVIAGVMAFVV), and 184–204 (SYYWHFVDVVWIGLFITIYFI).

Associates with subunits I, II and IV to form cytochrome c oxidase. The 4 subunit cytochrome c oxidase forms a supercomplex with the menaquinol-cytochrome c reductase complex (cytochrome bc1).

It localises to the cell membrane. It carries out the reaction 4 Fe(II)-[cytochrome c] + O2 + 8 H(+)(in) = 4 Fe(III)-[cytochrome c] + 2 H2O + 4 H(+)(out). The chain is Cytochrome c oxidase subunit 3 (ctaE) from Corynebacterium glutamicum (strain ATCC 13032 / DSM 20300 / JCM 1318 / BCRC 11384 / CCUG 27702 / LMG 3730 / NBRC 12168 / NCIMB 10025 / NRRL B-2784 / 534).